The primary structure comprises 398 residues: tRNA-specific 2-thiouridylase MnmA (398 aa).

ATP-binding positions include 19–26 (AMSGGVDS) and Leu45. The active-site Nucleophile is Cys113. A disulfide bond links Cys113 and Cys210. Gly137 serves as a coordination point for ATP. The tract at residues 160–162 (RDQ) is interaction with tRNA. Cys210 acts as the Cysteine persulfide intermediate in catalysis.

The protein belongs to the MnmA/TRMU family.

The protein resides in the cytoplasm. It carries out the reaction S-sulfanyl-L-cysteinyl-[protein] + uridine(34) in tRNA + AH2 + ATP = 2-thiouridine(34) in tRNA + L-cysteinyl-[protein] + A + AMP + diphosphate + H(+). Catalyzes the 2-thiolation of uridine at the wobble position (U34) of tRNA, leading to the formation of s(2)U34. The protein is tRNA-specific 2-thiouridylase MnmA of Rhodopseudomonas palustris (strain BisB5).